The primary structure comprises 211 residues: Guanylate kinase (211 aa).

A Guanylate kinase-like domain is found at 7-185 (GLLIVVTGPS…AVAELRAIIM (179 aa)). 14 to 21 (GPSAVGKG) is an ATP binding site.

This sequence belongs to the guanylate kinase family.

Its subcellular location is the cytoplasm. The catalysed reaction is GMP + ATP = GDP + ADP. Essential for recycling GMP and indirectly, cGMP. In Symbiobacterium thermophilum (strain DSM 24528 / JCM 14929 / IAM 14863 / T), this protein is Guanylate kinase.